Consider the following 219-residue polypeptide: Ion-translocating oxidoreductase complex subunit G (219 aa).

A helical membrane pass occupies residues 25–45 (GLLLGLFSLVSALMLALASDA). Threonine 187 is subject to FMN phosphoryl threonine.

Belongs to the RnfG family. As to quaternary structure, the complex is composed of six subunits: RnfA, RnfB, RnfC, RnfD, RnfE and RnfG. FMN serves as cofactor.

It is found in the cellular chromatophore membrane. Part of a membrane-bound complex that couples electron transfer with translocation of ions across the membrane. The sequence is that of Ion-translocating oxidoreductase complex subunit G from Cereibacter sphaeroides (strain ATCC 17029 / ATH 2.4.9) (Rhodobacter sphaeroides).